The following is a 417-amino-acid chain: Serine hydroxymethyltransferase (417 aa).

Residues Leu112 and 116–118 each bind (6S)-5,6,7,8-tetrahydrofolate; that span reads GHL. Lys221 carries the N6-(pyridoxal phosphate)lysine modification. Residue Glu247 coordinates (6S)-5,6,7,8-tetrahydrofolate.

It belongs to the SHMT family. In terms of assembly, homodimer. The cofactor is pyridoxal 5'-phosphate.

It is found in the cytoplasm. It carries out the reaction (6R)-5,10-methylene-5,6,7,8-tetrahydrofolate + glycine + H2O = (6S)-5,6,7,8-tetrahydrofolate + L-serine. The protein operates within one-carbon metabolism; tetrahydrofolate interconversion. It functions in the pathway amino-acid biosynthesis; glycine biosynthesis; glycine from L-serine: step 1/1. In terms of biological role, catalyzes the reversible interconversion of serine and glycine with tetrahydrofolate (THF) serving as the one-carbon carrier. This reaction serves as the major source of one-carbon groups required for the biosynthesis of purines, thymidylate, methionine, and other important biomolecules. Also exhibits THF-independent aldolase activity toward beta-hydroxyamino acids, producing glycine and aldehydes, via a retro-aldol mechanism. In Borrelia turicatae (strain 91E135), this protein is Serine hydroxymethyltransferase.